Reading from the N-terminus, the 301-residue chain is Averufin oxidase A (301 aa).

The signal sequence occupies residues 1 to 23 (MPTYALLGATGATGSAILRCLLA). Residues N62, N86, and N190 are each glycosylated (N-linked (GlcNAc...) asparagine).

Belongs to the avfA family.

It functions in the pathway mycotoxin biosynthesis. Functionally, averufin oxidase A; part of the fragmented gene cluster that mediates the biosynthesis of dothistromin (DOTH), a polyketide toxin very similar in structure to the aflatoxin precursor, versicolorin B. The first step of the pathway is the conversion of acetate to norsolorinic acid (NOR) and requires the fatty acid synthase subunits hexA and hexB, as well as the polyketide synthase pksA. PksA combines a hexanoyl starter unit and 7 malonyl-CoA extender units to synthesize the precursor NOR. The hexanoyl starter unit is provided to the acyl-carrier protein (ACP) domain by the fungal fatty acid synthase hexA/hexB. The second step is the conversion of NOR to averantin (AVN) and requires the norsolorinic acid ketoreductase nor1, which catalyzes the dehydration of norsolorinic acid to form (1'S)-averantin. The cytochrome P450 monooxygenase avnA then catalyzes the hydroxylation of AVN to 5'hydroxyaverantin (HAVN). The next step is performed by adhA that transforms HAVN to averufin (AVF). Averufin might then be converted to hydroxyversicolorone by cypX and avfA. Hydroxyversicolorone is further converted versiconal hemiacetal acetate (VHA) by moxY. VHA is then the substrate for the versiconal hemiacetal acetate esterase est1 to yield versiconal (VAL). Versicolorin B synthase vbsA then converts VAL to versicolorin B (VERB) by closing the bisfuran ring. Then, the activity of the versicolorin B desaturase verB leads to versicolorin A (VERA). DotB, a predicted chloroperoxidase, may perform epoxidation of the A-ring of VERA. Alternatively, a cytochrome P450, such as cypX or avnA could catalyze this step. It is also possible that another, uncharacterized, cytochrome P450 enzyme is responsible for this step. Opening of the epoxide could potentially be achieved by the epoxide hydrolase epoA. However, epoA seems not to be required for DOTH biosynthesis, but other epoxide hydrolases may have the ability to complement this hydrolysis. Alternatively, opening of the epoxide ring could be achieved non-enzymatically. The next step is the deoxygenation of ring A to yield the 5,8-dihydroxyanthraquinone which is most likely catalyzed by the NADPH dehydrogenase encoded by ver1. The last stages of DOTH biosynthesis are proposed to involve hydroxylation of the bisfuran. OrdB and norB might have oxidative roles here. An alternative possibility is that cytochrome P450 monoogenases such as avnA and cypX might perform these steps in addition to previously proposed steps. The protein is Averufin oxidase A of Dothistroma septosporum (Red band needle blight fungus).